Here is a 454-residue protein sequence, read N- to C-terminus: tRNA modification GTPase MnmE (454 aa).

R23, E80, and K120 together coordinate (6S)-5-formyl-5,6,7,8-tetrahydrofolate. A TrmE-type G domain is found at 216-377 (GMKVVIAGRP…LRDHLKQSMG (162 aa)). K(+) is bound at residue N226. Residues 226–231 (NAGKSS), 245–251 (TDIAGTT), 270–273 (DTAG), 335–338 (NKAD), and 358–360 (SAR) contribute to the GTP site. S230 provides a ligand contact to Mg(2+). Positions 245, 247, and 250 each coordinate K(+). T251 is a binding site for Mg(2+). A (6S)-5-formyl-5,6,7,8-tetrahydrofolate-binding site is contributed by K454.

The protein belongs to the TRAFAC class TrmE-Era-EngA-EngB-Septin-like GTPase superfamily. TrmE GTPase family. As to quaternary structure, homodimer. Heterotetramer of two MnmE and two MnmG subunits. K(+) is required as a cofactor.

It localises to the cytoplasm. Functionally, exhibits a very high intrinsic GTPase hydrolysis rate. Involved in the addition of a carboxymethylaminomethyl (cmnm) group at the wobble position (U34) of certain tRNAs, forming tRNA-cmnm(5)s(2)U34. The sequence is that of tRNA modification GTPase MnmE from Serratia proteamaculans (strain 568).